A 177-amino-acid polypeptide reads, in one-letter code: Calerythrin (177 aa).

4 consecutive EF-hand domains span residues 5 to 40 (IASD…IAEA), 45 to 90 (AGAA…NLIF), 100 to 134 (VLGP…ALGM), and 134 to 169 (MSKA…FHFG). Ca(2+) is bound by residues Asp18, Asp20, Asn22, and Asp29. Positions 113, 115, 117, 119, 124, 147, 149, 151, 153, and 158 each coordinate Ca(2+).

This Saccharopolyspora erythraea (Streptomyces erythraeus) protein is Calerythrin.